A 395-amino-acid polypeptide reads, in one-letter code: Outer membrane protein assembly factor BamB (395 aa).

Residues 1–20 (MKSWCKNLLAAGLSLAMLSA) form the signal peptide. The N-palmitoyl cysteine moiety is linked to residue C21. C21 carries S-diacylglycerol cysteine lipidation.

It belongs to the BamB family. In terms of assembly, part of the Bam complex.

The protein resides in the cell outer membrane. Part of the outer membrane protein assembly complex, which is involved in assembly and insertion of beta-barrel proteins into the outer membrane. This chain is Outer membrane protein assembly factor BamB, found in Shewanella oneidensis (strain ATCC 700550 / JCM 31522 / CIP 106686 / LMG 19005 / NCIMB 14063 / MR-1).